We begin with the raw amino-acid sequence, 158 residues long: NAD(P)H-quinone oxidoreductase subunit J, chloroplastic (158 aa).

The protein belongs to the complex I 30 kDa subunit family. NDH is composed of at least 16 different subunits, 5 of which are encoded in the nucleus.

The protein resides in the plastid. It is found in the chloroplast thylakoid membrane. The catalysed reaction is a plastoquinone + NADH + (n+1) H(+)(in) = a plastoquinol + NAD(+) + n H(+)(out). It catalyses the reaction a plastoquinone + NADPH + (n+1) H(+)(in) = a plastoquinol + NADP(+) + n H(+)(out). In terms of biological role, NDH shuttles electrons from NAD(P)H:plastoquinone, via FMN and iron-sulfur (Fe-S) centers, to quinones in the photosynthetic chain and possibly in a chloroplast respiratory chain. The immediate electron acceptor for the enzyme in this species is believed to be plastoquinone. Couples the redox reaction to proton translocation, and thus conserves the redox energy in a proton gradient. This Nuphar advena (Common spatterdock) protein is NAD(P)H-quinone oxidoreductase subunit J, chloroplastic.